The chain runs to 118 residues: Large ribosomal subunit protein bL19 (118 aa).

It belongs to the bacterial ribosomal protein bL19 family.

In terms of biological role, this protein is located at the 30S-50S ribosomal subunit interface and may play a role in the structure and function of the aminoacyl-tRNA binding site. The polypeptide is Large ribosomal subunit protein bL19 (Salinispora tropica (strain ATCC BAA-916 / DSM 44818 / JCM 13857 / NBRC 105044 / CNB-440)).